The sequence spans 155 residues: Interleukin-2 (155 aa).

The N-terminal stretch at 1-20 is a signal peptide; that stretch reads MYKIQLLSCIALTLALVANG. Residue threonine 23 is glycosylated (O-linked (GalNAc...) threonine). Cysteine 79 and cysteine 127 are joined by a disulfide.

This sequence belongs to the IL-2 family.

It localises to the secreted. In terms of biological role, cytokine produced by activated CD4-positive helper T-cells and to a lesser extend activated CD8-positive T-cells and natural killer (NK) cells that plays pivotal roles in the immune response and tolerance. Binds to a receptor complex composed of either the high-affinity trimeric IL-2R (IL2RA/CD25, IL2RB/CD122 and IL2RG/CD132) or the low-affinity dimeric IL-2R (IL2RB and IL2RG). Interaction with the receptor leads to oligomerization and conformation changes in the IL-2R subunits resulting in downstream signaling starting with phosphorylation of JAK1 and JAK3. In turn, JAK1 and JAK3 phosphorylate the receptor to form a docking site leading to the phosphorylation of several substrates including STAT5. This process leads to activation of several pathways including STAT, phosphoinositide-3-kinase/PI3K and mitogen-activated protein kinase/MAPK pathways. Functions as a T-cell growth factor and can increase NK-cell cytolytic activity as well. Promotes strong proliferation of activated B-cells and subsequently immunoglobulin production. Plays a pivotal role in regulating the adaptive immune system by controlling the survival and proliferation of regulatory T-cells, which are required for the maintenance of immune tolerance. Moreover, participates in the differentiation and homeostasis of effector T-cell subsets, including Th1, Th2, Th17 as well as memory CD8-positive T-cells. The sequence is that of Interleukin-2 (IL2) from Bos taurus (Bovine).